A 78-amino-acid chain; its full sequence is Signal peptidase complex subunit 1 (78 aa).

The Cytoplasmic segment spans residues 1-18; sequence MNYLEGTIDFAGQLRCQK. Residues 19 to 38 traverse the membrane as a helical segment; the sequence is YMNYGLCTSAVISYIYGYLV. At 39–42 the chain is on the lumenal side; sequence QDSY. The chain crosses the membrane as a helical span at residues 43 to 63; it reads CVIKLFLILASLVALVCLPAW. Residues 64–78 are Cytoplasmic-facing; that stretch reads SMYNKNPLKFQKKKE.

Belongs to the SPCS1 family. In terms of assembly, component of the signal peptidase complex (SPC) composed of a catalytic subunit sec11 and three accessory subunits spc1, spc2 and spc3. The complex induces a local thinning of the ER membrane which is used to measure the length of the signal peptide (SP) h-region of protein substrates. This ensures the selectivity of the complex towards h-regions shorter than 18-20 amino acids. SPC associates with the translocon complex.

It is found in the endoplasmic reticulum membrane. In terms of biological role, component of the signal peptidase complex (SPC) which catalyzes the cleavage of N-terminal signal sequences from nascent proteins as they are translocated into the lumen of the endoplasmic reticulum. Dispensable for SPC enzymatic activity. In Schizosaccharomyces pombe (strain 972 / ATCC 24843) (Fission yeast), this protein is Signal peptidase complex subunit 1.